The chain runs to 491 residues: Ketol-acid reductoisomerase (NADP(+)) (491 aa).

Residues 15 to 208 (AQLGKCRFMA…GGHRAGVLES (194 aa)) enclose the KARI N-terminal Rossmann domain. Residues 45 to 48 (CGAQ), Arg68, Arg76, Ser78, and 108 to 110 (DKQ) each bind NADP(+). His132 is an active-site residue. Residue Gly158 coordinates NADP(+). KARI C-terminal knotted domains lie at 209–344 (SFVA…TAPQ) and 345–484 (YEGK…MTDM). Asp217, Glu221, Glu389, and Glu393 together coordinate Mg(2+). Ser414 contacts substrate.

Belongs to the ketol-acid reductoisomerase family. It depends on Mg(2+) as a cofactor.

The enzyme catalyses (2R)-2,3-dihydroxy-3-methylbutanoate + NADP(+) = (2S)-2-acetolactate + NADPH + H(+). It catalyses the reaction (2R,3R)-2,3-dihydroxy-3-methylpentanoate + NADP(+) = (S)-2-ethyl-2-hydroxy-3-oxobutanoate + NADPH + H(+). It participates in amino-acid biosynthesis; L-isoleucine biosynthesis; L-isoleucine from 2-oxobutanoate: step 2/4. Its pathway is amino-acid biosynthesis; L-valine biosynthesis; L-valine from pyruvate: step 2/4. Involved in the biosynthesis of branched-chain amino acids (BCAA). Catalyzes an alkyl-migration followed by a ketol-acid reduction of (S)-2-acetolactate (S2AL) to yield (R)-2,3-dihydroxy-isovalerate. In the isomerase reaction, S2AL is rearranged via a Mg-dependent methyl migration to produce 3-hydroxy-3-methyl-2-ketobutyrate (HMKB). In the reductase reaction, this 2-ketoacid undergoes a metal-dependent reduction by NADPH to yield (R)-2,3-dihydroxy-isovalerate. The chain is Ketol-acid reductoisomerase (NADP(+)) from Klebsiella pneumoniae subsp. pneumoniae (strain ATCC 700721 / MGH 78578).